The chain runs to 341 residues: Uroporphyrinogen decarboxylase (341 aa).

Substrate is bound by residues 26–30, Asp-75, Tyr-150, Ser-205, and His-318; that span reads RQAGR.

This sequence belongs to the uroporphyrinogen decarboxylase family. Homodimer.

The protein localises to the cytoplasm. It carries out the reaction uroporphyrinogen III + 4 H(+) = coproporphyrinogen III + 4 CO2. Its pathway is porphyrin-containing compound metabolism; protoporphyrin-IX biosynthesis; coproporphyrinogen-III from 5-aminolevulinate: step 4/4. Catalyzes the decarboxylation of four acetate groups of uroporphyrinogen-III to yield coproporphyrinogen-III. This chain is Uroporphyrinogen decarboxylase, found in Thermus thermophilus (strain ATCC 27634 / DSM 579 / HB8).